We begin with the raw amino-acid sequence, 408 residues long: S100P-binding protein (408 aa).

Disordered regions lie at residues Met-1–Pro-111, Lys-162–Pro-234, and Val-271–His-291. Over residues Ser-28–Asp-59 the composition is skewed to acidic residues. 2 stretches are compositionally biased toward basic and acidic residues: residues Asp-77 to Arg-86 and Lys-162 to Gly-185. A Phosphoserine modification is found at Ser-187. Residues Pro-188–Pro-234 are compositionally biased toward polar residues. The span at Val-280 to His-291 shows a compositional bias: basic and acidic residues.

In terms of assembly, interacts with S100P. As to expression, expressed in brain, spleen, and lung. Not detected in pancreas or liver. In pancreas, expressed predominantly in islet cells and to a lesser extent in acinar cells, but not expressed in ductal cells. Up-regulated in various pancreatic ductal adenocarcinomas and pancreatic intraepithelial neoplasias. Detected in pancreatic ductal adenocarcinoma cells (at protein level). Not detected in non-neoplastic ductal epithelium (at protein level).

It is found in the nucleus. In Homo sapiens (Human), this protein is S100P-binding protein.